A 2275-amino-acid chain; its full sequence is Multifunctional protein pyrABCN (2275 aa).

Residues 1-440 are GATase (Glutamine amidotransferase); the sequence is MPETVGHEEP…PGPRDTEYLF (440 aa). L-glutamine-binding residues include serine 102, glycine 313, and glycine 315. The 189-residue stretch at 265 to 453 folds into the Glutamine amidotransferase type-1 domain; that stretch reads RVLCLDVGLK…INAIKDTIAS (189 aa). Catalysis depends on cysteine 342, which acts as the Nucleophile; for GATase activity. Residues leucine 343, glutamine 346, asparagine 384, glycine 386, and tyrosine 387 each coordinate L-glutamine. Residues histidine 426 and glutamate 428 each act as for GATase activity in the active site. Residues 441–482 are linker; that stretch reads DVFINAIKDTIASPEALQKPVNFPGGAVAENIKASPRVSVKK. The interval 483-1522 is CPSase (Carbamoyl-phosphate synthase); sequence VLILGSGGLS…TNVKNAKILI (1040 aa). ATP is bound by residues arginine 600, arginine 640, glycine 646, glycine 647, arginine 677, methionine 679, glutamate 684, glycine 710, isoleucine 711, histidine 712, glutamine 753, and glutamate 767. ATP-grasp domains follow at residues 604-796 and 1139-1330; these read ARSM…KLGL and SRML…KAMI. The Mg(2+) site is built by glutamine 753, glutamate 767, and asparagine 769. Mn(2+)-binding residues include glutamine 753, glutamate 767, and asparagine 769. ATP contacts are provided by arginine 1175, lysine 1214, isoleucine 1216, glutamate 1221, glycine 1246, valine 1247, histidine 1248, serine 1249, glutamine 1289, and glutamate 1301. Glutamine 1289, glutamate 1301, and asparagine 1303 together coordinate Mg(2+). Mn(2+) contacts are provided by glutamine 1289, glutamate 1301, and asparagine 1303. An MGS-like domain is found at 1396-1575; sequence FKLPKRNILL…KDFEAVTKAS (180 aa). The segment at 1523 to 1532 is linker; that stretch reads EAIARHYALN. Residues 1533 to 1862 are defective DHOase domain; that stretch reads VQTIDYQTSH…FQGKTSCLDS (330 aa). The disordered stretch occupies residues 1863 to 1882; that stretch reads EITPDAPKGSDMSGHRIVPA. The interval 1863 to 1953 is linker; that stretch reads EITPDAPKGS…LQMLSRSPFK (91 aa). An ATCase (Aspartate transcarbamylase) region spans residues 1954 to 2258; the sequence is QKHVLSVNQF…EFDMLMWMQM (305 aa). Arginine 2006 and threonine 2007 together coordinate carbamoyl phosphate. Residue lysine 2034 participates in L-aspartate binding. Residues arginine 2055, histidine 2083, and glutamine 2086 each contribute to the carbamoyl phosphate site. Arginine 2116 and arginine 2178 together coordinate L-aspartate. Residues leucine 2217 and proline 2218 each contribute to the carbamoyl phosphate site.

The protein in the central section; belongs to the metallo-dependent hydrolases superfamily. DHOase family. CAD subfamily. In the N-terminal section; belongs to the CarA family. This sequence in the 2nd section; belongs to the CarB family. It in the 3rd section; belongs to the metallo-dependent hydrolases superfamily. DHOase family. CAD subfamily. The protein in the C-terminal section; belongs to the aspartate/ornithine carbamoyltransferase superfamily. ATCase family. It depends on Mg(2+) as a cofactor. The cofactor is Mn(2+).

It catalyses the reaction hydrogencarbonate + L-glutamine + 2 ATP + H2O = carbamoyl phosphate + L-glutamate + 2 ADP + phosphate + 2 H(+). The enzyme catalyses L-glutamine + H2O = L-glutamate + NH4(+). It carries out the reaction hydrogencarbonate + NH4(+) + 2 ATP = carbamoyl phosphate + 2 ADP + phosphate + 2 H(+). The catalysed reaction is carbamoyl phosphate + L-aspartate = N-carbamoyl-L-aspartate + phosphate + H(+). Its pathway is pyrimidine metabolism; UMP biosynthesis via de novo pathway; (S)-dihydroorotate from bicarbonate: step 1/3. The protein operates within pyrimidine metabolism; UMP biosynthesis via de novo pathway; (S)-dihydroorotate from bicarbonate: step 2/3. Functionally, multifunctional protein that encodes the first 2 enzymatic activities of the de novo pyrimidine pathway: carbamoylphosphate synthetase (CPSase; EC 6.3.5.5) and aspartate transcarbamylase (ATCase; EC 2.1.3.2). The CPSase-function is accomplished in 2 steps, by a glutamine-dependent amidotransferase activity (GATase) that binds and cleaves glutamine to produce ammonia, followed by an ammonium-dependent carbamoyl phosphate synthetase, which reacts with the ammonia, hydrogencarbonate and ATP to form carbamoyl phosphate. The endogenously produced carbamoyl phosphate is sequestered and channeled to the ATCase active site. ATCase then catalyzes the formation of carbamoyl-L-aspartate from L-aspartate and carbamoyl phosphate. The protein is Multifunctional protein pyrABCN of Emericella nidulans (strain FGSC A4 / ATCC 38163 / CBS 112.46 / NRRL 194 / M139) (Aspergillus nidulans).